The primary structure comprises 465 residues: Serine/threonine-protein kinase AtPK1/AtPK6 (465 aa).

The short motif at Leu-91–Glu-96 is the LVxCxE motif element. The 256-residue stretch at Phe-134 to Phe-389 folds into the Protein kinase domain. ATP contacts are provided by residues Val-140–Val-148 and Lys-163. Asp-257 functions as the Proton acceptor in the catalytic mechanism. The tract at residues Asp-275–Glu-301 is activation loop. Residue Ser-290 is modified to Phosphoserine; by PDPK1. An AGC-kinase C-terminal domain is found at Lys-390–Gln-460. Phosphothreonine; by TOR is present on Thr-449.

Belongs to the protein kinase superfamily. AGC Ser/Thr protein kinase family. S6 kinase subfamily. Interacts with RAPTOR1. Interacts with RBR1-E2FB complex through its LVxCxE motif. Interacts with TAP46. Binds to MRF1. Undergoes serine-specific autophosphorylation. Phosphorylated at Thr-449 by TOR. Expressed in all tissues.

Its subcellular location is the cytoplasm. The protein resides in the nucleus. It catalyses the reaction L-seryl-[protein] + ATP = O-phospho-L-seryl-[protein] + ADP + H(+). The catalysed reaction is L-threonyl-[protein] + ATP = O-phospho-L-threonyl-[protein] + ADP + H(+). Its activity is regulated as follows. Activated by PDK1. Repressed during osmotic stress. In terms of biological role, downstream effector of TOR signaling pathway involved in osmotic stress response. Could be involved in the control of plant growth and development. Phosphorylates the ribosomal proteins P14, P16 and S6. Functions as a repressor of cell proliferation and required for maintenance of chromosome stability and ploidy levels through the RBR1-E2F pathway. Mediates the phosphorylation of MRFs (e.g. MRF1). In Arabidopsis thaliana (Mouse-ear cress), this protein is Serine/threonine-protein kinase AtPK1/AtPK6.